A 243-amino-acid chain; its full sequence is MRSIRMRAEFQGEHVSGAERIVPYHEVEKTVLELLKRPRVYDKVVITVERLKDVEIVPKALPILSYDFKSVEEARAFAVSKLVEAGVPKPVAELAIKLLHEGPNPKGGNMRGAVLMDVETGERLEPDRERGIRTTRMDWKDRKYIKEVLKKRGIKREYLERLIDALAVATKNVYCGVLAELCWSDDPEYTTGYVAGPHIGYVRIKPMKEEGVPIGGRVYFIRKENLEKIIQCLQEKPILINNL.

This sequence belongs to the BioW family. In terms of assembly, homodimer. It depends on Mg(2+) as a cofactor.

It carries out the reaction heptanedioate + ATP + CoA = 6-carboxyhexanoyl-CoA + AMP + diphosphate. Its pathway is metabolic intermediate metabolism; pimeloyl-CoA biosynthesis; pimeloyl-CoA from pimelate: step 1/1. Its function is as follows. Catalyzes the transformation of pimelate into pimeloyl-CoA with concomitant hydrolysis of ATP to AMP. This chain is 6-carboxyhexanoate--CoA ligase, found in Thermocrinis albus (strain DSM 14484 / JCM 11386 / HI 11/12).